Reading from the N-terminus, the 1135-residue chain is MPGLVEAPVEPYARPVRTLVQLALDPDDGLEYVSLNSQVYELIYGDLSDNKTRFVSLQLLGSPLFVEYQLFRAELDSELPQDSIELHSPRLSSKYGSDFTLEKCIVVPVTKVLSLTSVIMSFPHDVYRLIEGISKERLLEIVASERGSDAGHILIRKTDFLKTLHGEVIHCEPVDQGFLSSDTNLVIVKQEGLKRGVNGNVNGSHPDPSEIPVSTPVDFSVSHLGLGDLTFDDTSIFSNLTLQPLELQIGFLKYSMLMDCTHILESSHEFDHEDDQLFACVCSSVLQKLGCFSGDLVQIQTCDCGAGIVCACDKSARRKITIRVFSLADPNDFDPEKLYLSPIFLNSIGNPRIVFVKRLASQRPNGDFVCEKLENHVPVAKEVVIARVASPITLDRTMQHLFLSNLKTYFESKHRVIVKDQYIPVPIDTVLAKSLFSTYNASGDETQPEIIPQGIPNELAWFKITDGTTETDDGKSLVAGKQYIIDPAKTRMIQSGVCSDKVPLSDGISYSQLRDYFELPRQFAYPCLRISNVLTFPYANQLRKIVSVAFRIRDNSYSRSRVQTTILLSSMARCVGKATLVRRIATEFGANLLELDAYDLLNQASVSKTIGTIRGKSDRVVDSCCSVILYIRHIEALAKKPDPNQQQKDSMSLRLAELIDEYTSKGAIFIGSTNDADAISELIRSKFKFDISINVPTEPERKLILTDLLDDMKTKDKTPVVLRPDVSLDTLALQSAGLTANDLVSIVDNTITIAIERLERLSEEQKVNWDQLLSFNGGRIKLTPEDFETSINDARNKFSDMIGAPRIPDVKWEDVGGLDVVKDEILDTIEMPLKHPELFSKGMKKRSGILFYGPPGTGKTLLAKAIATNFALNFFSVKGPELLNMYIGESEANVRRVFQKARDAKPCVIFFDELDSVAPKRGNQGDSGGVMDRIVSQLLAELDGMSGAEGGDGVFVVGATNRPDLLDEALLRPGRFDKMLYLGIADTHEKQAKIIQALTRKFQLDPSVDLGRIAETCPFTYTGADFYALCSDAMLNAMTRTAGAVEKKINEYNCNREEGDKISTRFWFDNIAKPEDTQVLVKSEDFAKARDELVPSVSAEELQHYLSVRENFEGGKTQDVMHTVPDGADIIISHD.

ATP is bound at residue 853–860 (GPPGTGKT).

It belongs to the AAA ATPase family. In terms of assembly, interacts with PEX1; forming the PEX1-PEX6 AAA ATPase complex, which is composed of a heterohexamer formed by a trimer of PEX1-PEX6 dimers.

It localises to the cytoplasm. Its subcellular location is the cytosol. It is found in the peroxisome membrane. The enzyme catalyses ATP + H2O = ADP + phosphate + H(+). In terms of biological role, component of the PEX1-PEX6 AAA ATPase complex, a protein dislocase complex that mediates the ATP-dependent extraction of the PEX5 receptor from peroxisomal membranes, an essential step for PEX5 recycling. Specifically recognizes PEX5 monoubiquitinated at 'Cys-6', and pulls it out of the peroxisome lumen through the PEX2-PEX10-PEX12 retrotranslocation channel. Extraction by the PEX1-PEX6 AAA ATPase complex is accompanied by unfolding of the TPR repeats and release of bound cargo from PEX5. This Pichia angusta (Yeast) protein is Peroxisomal ATPase PEX6 (PEX6).